A 447-amino-acid polypeptide reads, in one-letter code: Serine--tRNA ligase (447 aa).

245-247 is an L-serine binding site; sequence TAE. ATP-binding positions include 276 to 278 and valine 292; that span reads RKE. Glutamate 299 provides a ligand contact to L-serine. ATP is bound at residue 363–366; that stretch reads ELAS. L-serine is bound at residue threonine 398.

It belongs to the class-II aminoacyl-tRNA synthetase family. Type-1 seryl-tRNA synthetase subfamily. In terms of assembly, homodimer. The tRNA molecule binds across the dimer.

Its subcellular location is the cytoplasm. It catalyses the reaction tRNA(Ser) + L-serine + ATP = L-seryl-tRNA(Ser) + AMP + diphosphate + H(+). The enzyme catalyses tRNA(Sec) + L-serine + ATP = L-seryl-tRNA(Sec) + AMP + diphosphate + H(+). Its pathway is aminoacyl-tRNA biosynthesis; selenocysteinyl-tRNA(Sec) biosynthesis; L-seryl-tRNA(Sec) from L-serine and tRNA(Sec): step 1/1. Its function is as follows. Catalyzes the attachment of serine to tRNA(Ser). Is also able to aminoacylate tRNA(Sec) with serine, to form the misacylated tRNA L-seryl-tRNA(Sec), which will be further converted into selenocysteinyl-tRNA(Sec). This is Serine--tRNA ligase from Pyrobaculum neutrophilum (strain DSM 2338 / JCM 9278 / NBRC 100436 / V24Sta) (Thermoproteus neutrophilus).